Reading from the N-terminus, the 552-residue chain is DNA ligase (552 aa).

Glu229 serves as a coordination point for ATP. The active-site N6-AMP-lysine intermediate is the Lys231. Positions 236 and 283 each coordinate ATP. Mg(2+) is bound by residues Glu283 and Glu377. 2 residues coordinate ATP: Lys382 and Lys397.

Belongs to the ATP-dependent DNA ligase family. Interacts with host TOP2A and TOP2B. Mg(2+) serves as cofactor.

The protein resides in the host cytoplasm. It carries out the reaction ATP + (deoxyribonucleotide)n-3'-hydroxyl + 5'-phospho-(deoxyribonucleotide)m = (deoxyribonucleotide)n+m + AMP + diphosphate.. In terms of biological role, DNA ligase that seals nicks in double-stranded DNA during DNA replication, DNA recombination and DNA repair. Recruits cellular topoisomerase II to sites of viral replication and assembly. In Vaccinia virus (strain Copenhagen) (VACV), this protein is DNA ligase (OPG180).